The primary structure comprises 592 residues: Putative esterase (592 aa).

A helical membrane pass occupies residues leucine 12–isoleucine 32. 5 N-linked (GlcNAc...) asparagine; by host glycosylation sites follow: asparagine 68, asparagine 83, asparagine 95, asparagine 447, and asparagine 510. The active-site Charge relay system is histidine 513. A glycan (N-linked (GlcNAc...) asparagine; by host) is linked at asparagine 528.

The protein belongs to the type-B carboxylesterase/lipase family.

The protein localises to the membrane. It carries out the reaction a carboxylic ester + H2O = an alcohol + a carboxylate + H(+). The sequence is that of Putative esterase from Spodoptera frugiperda (Fall armyworm).